Here is a 185-residue protein sequence, read N- to C-terminus: Histone H1-delta (185 aa).

Disordered regions lie at residues 1-37 (MADT…PKYS) and 90-185 (RHVK…GKKK). Residues 32–105 (SHPKYSDMIA…GASGSFLLAE (74 aa)) form the H15 domain. Positions 109-185 (TPKKAAAKKA…KAAKGKGKKK (77 aa)) are enriched in basic residues.

This sequence belongs to the histone H1/H5 family.

It localises to the nucleus. The protein localises to the chromosome. In terms of biological role, histones H1 are necessary for the condensation of nucleosome chains into higher-order structures. In Strongylocentrotus purpuratus (Purple sea urchin), this protein is Histone H1-delta.